The following is a 185-amino-acid chain: Ribosome-recycling factor (185 aa).

The protein belongs to the RRF family.

It is found in the cytoplasm. Responsible for the release of ribosomes from messenger RNA at the termination of protein biosynthesis. May increase the efficiency of translation by recycling ribosomes from one round of translation to another. The protein is Ribosome-recycling factor of Aliivibrio salmonicida (strain LFI1238) (Vibrio salmonicida (strain LFI1238)).